Consider the following 348-residue polypeptide: tRNA N6-adenosine threonylcarbamoyltransferase (348 aa).

Fe cation is bound by residues His115 and His119. Substrate-binding positions include 138 to 142 (LVSGG), Asp171, Gly184, and Asn276. Asp304 is a Fe cation binding site.

This sequence belongs to the KAE1 / TsaD family. Fe(2+) is required as a cofactor.

The protein resides in the cytoplasm. The catalysed reaction is L-threonylcarbamoyladenylate + adenosine(37) in tRNA = N(6)-L-threonylcarbamoyladenosine(37) in tRNA + AMP + H(+). Required for the formation of a threonylcarbamoyl group on adenosine at position 37 (t(6)A37) in tRNAs that read codons beginning with adenine. Is involved in the transfer of the threonylcarbamoyl moiety of threonylcarbamoyl-AMP (TC-AMP) to the N6 group of A37, together with TsaE and TsaB. TsaD likely plays a direct catalytic role in this reaction. The protein is tRNA N6-adenosine threonylcarbamoyltransferase of Xylella fastidiosa (strain M23).